Reading from the N-terminus, the 90-residue chain is Probable Fe(2+)-trafficking protein (90 aa).

It belongs to the Fe(2+)-trafficking protein family.

Could be a mediator in iron transactions between iron acquisition and iron-requiring processes, such as synthesis and/or repair of Fe-S clusters in biosynthetic enzymes. This is Probable Fe(2+)-trafficking protein from Nitrosomonas eutropha (strain DSM 101675 / C91 / Nm57).